Consider the following 380-residue polypeptide: Queuine tRNA-ribosyltransferase (380 aa).

The active-site Proton acceptor is the Asp-96. Residues 96 to 100 (DSGGF), Asp-150, Gln-193, and Gly-220 each bind substrate. Residues 251 to 257 (GVGAPDS) are RNA binding. Asp-270 functions as the Nucleophile in the catalytic mechanism. An RNA binding; important for wobble base 34 recognition region spans residues 275–279 (TRIAR). Positions 308, 310, 313, and 339 each coordinate Zn(2+).

The protein belongs to the queuine tRNA-ribosyltransferase family. Homodimer. Within each dimer, one monomer is responsible for RNA recognition and catalysis, while the other monomer binds to the replacement base PreQ1. Zn(2+) serves as cofactor.

The enzyme catalyses 7-aminomethyl-7-carbaguanine + guanosine(34) in tRNA = 7-aminomethyl-7-carbaguanosine(34) in tRNA + guanine. It functions in the pathway tRNA modification; tRNA-queuosine biosynthesis. Catalyzes the base-exchange of a guanine (G) residue with the queuine precursor 7-aminomethyl-7-deazaguanine (PreQ1) at position 34 (anticodon wobble position) in tRNAs with GU(N) anticodons (tRNA-Asp, -Asn, -His and -Tyr). Catalysis occurs through a double-displacement mechanism. The nucleophile active site attacks the C1' of nucleotide 34 to detach the guanine base from the RNA, forming a covalent enzyme-RNA intermediate. The proton acceptor active site deprotonates the incoming PreQ1, allowing a nucleophilic attack on the C1' of the ribose to form the product. After dissociation, two additional enzymatic reactions on the tRNA convert PreQ1 to queuine (Q), resulting in the hypermodified nucleoside queuosine (7-(((4,5-cis-dihydroxy-2-cyclopenten-1-yl)amino)methyl)-7-deazaguanosine). This is Queuine tRNA-ribosyltransferase from Streptococcus sanguinis (strain SK36).